Consider the following 130-residue polypeptide: MAKTNPSPPPAPERIAAFRTGLSAETRAAAYLMAKGYRILARRFRTPYGEIDIVAKKRGLVAFIEVKARAKLDDAAYAVTPRQQQRIVDAASAWLMTHPEHADLELRFDALLIAPRSLPRHLIAAFDAST.

This sequence belongs to the UPF0102 family.

This chain is UPF0102 protein RPE_0358, found in Rhodopseudomonas palustris (strain BisA53).